We begin with the raw amino-acid sequence, 374 residues long: Isopentenyl-diphosphate delta-isomerase (374 aa).

13–14 contributes to the substrate binding site; it reads RK. Residues 71–73, serine 104, and asparagine 132 each bind FMN; that span reads GMT. 104 to 106 contributes to the substrate binding site; sequence SQR. Glutamine 171 lines the substrate pocket. Glutamate 172 contacts Mg(2+). FMN-binding positions include lysine 203, threonine 233, 282–284, and 303–304; these read GMR and AL.

It belongs to the IPP isomerase type 2 family. As to quaternary structure, homooctamer. Dimer of tetramers. The cofactor is FMN. NADPH serves as cofactor. It depends on Mg(2+) as a cofactor.

The protein resides in the cytoplasm. It catalyses the reaction isopentenyl diphosphate = dimethylallyl diphosphate. Functionally, involved in the biosynthesis of isoprenoids. Catalyzes the 1,3-allylic rearrangement of the homoallylic substrate isopentenyl (IPP) to its allylic isomer, dimethylallyl diphosphate (DMAPP). The sequence is that of Isopentenyl-diphosphate delta-isomerase from Thermococcus onnurineus (strain NA1).